A 726-amino-acid chain; its full sequence is Probable dipeptidyl-peptidase 5 (726 aa).

The signal sequence occupies residues 1 to 19 (MAAAKWLIASLAFASSGLA). N-linked (GlcNAc...) asparagine glycans are attached at residues Asn96 and Asn252. The interval 269 to 291 (AEPINKRNGPRTPQGIEGASSSP) is disordered. Ser558 acts as the Charge relay system in catalysis. Asn605 carries an N-linked (GlcNAc...) asparagine glycan. Active-site charge relay system residues include Asp641 and His673. Residue Asn699 is glycosylated (N-linked (GlcNAc...) asparagine).

This sequence belongs to the peptidase S9C family.

It is found in the secreted. In terms of biological role, extracellular dipeptidyl-peptidase which removes N-terminal dipeptides sequentially from polypeptides having unsubstituted N-termini. Contributes to pathogenicity. This chain is Probable dipeptidyl-peptidase 5 (DPP5), found in Trichophyton verrucosum (strain HKI 0517).